The chain runs to 663 residues: 72 kDa type IV collagenase (663 aa).

An N-terminal signal peptide occupies residues 1 to 26 (MKTHSVFGFFFKVLLIQVYLFNKTLA). Positions 27–106 (APSPIIKFPG…PRCGNPDVAN (80 aa)) are cleaved as a propeptide — activation peptide. Residues 97 to 104 (PRCGNPDV) carry the Cysteine switch motif. Cysteine 99 lines the Zn(2+) pocket. The collagenase-like 1 stretch occupies residues 107–218 (YNFFPRKPKW…LWTLGEGQVV (112 aa)). 2 residues coordinate Ca(2+): aspartate 131 and aspartate 165. Residues histidine 175 and aspartate 177 each contribute to the Zn(2+) site. 2 residues coordinate Ca(2+): aspartate 182 and glycine 183. Residue histidine 190 coordinates Zn(2+). Ca(2+) is bound by residues glycine 197, glycine 199, and aspartate 201. Histidine 203 lines the Zn(2+) pocket. Residues aspartate 205, aspartate 206, and glutamate 208 each coordinate Ca(2+). The collagen-binding stretch occupies residues 219 to 393 (RVKYGNADGE…WGFCPDQGYS (175 aa)). Fibronectin type-II domains lie at 225-273 (ADGE…FCPH), 283-331 (GDGQ…FCPE), and 341-389 (SEGA…FCPD). 6 cysteine pairs are disulfide-bonded: cysteine 230–cysteine 256, cysteine 244–cysteine 271, cysteine 288–cysteine 314, cysteine 302–cysteine 329, cysteine 346–cysteine 372, and cysteine 360–cysteine 387. The segment at 394 to 468 (LFLVAAHEFG…GPRPTLGPVT (75 aa)) is collagenase-like 2. Histidine 400 contributes to the Zn(2+) binding site. Glutamate 401 is a catalytic residue. Histidine 404 and histidine 410 together coordinate Zn(2+). The segment at 445-464 (SPDVEPGPGPGPGPGPRPTL) is disordered. The segment covering 449-463 (EPGPGPGPGPGPRPT) has biased composition (pro residues). Cysteine 472 and cysteine 663 are disulfide-bonded. 4 Hemopexin repeats span residues 475 to 519 (DIVF…WPDL), 520 to 566 (PEKI…GLPP), 568 to 616 (VQRI…WNGV), and 617 to 663 (PDNL…WLGC). Ca(2+)-binding residues include aspartate 479, aspartate 524, aspartate 572, and aspartate 621.

The protein belongs to the peptidase M10A family. As to quaternary structure, ligand for integrin alpha-V/beta-3. Requires Ca(2+) as cofactor. Zn(2+) is required as a cofactor. Post-translationally, the propeptide is processed by MMP14 (MT-MMP1) and MMP16 (MT-MMP3). In terms of tissue distribution, produced by normal skin fibroblasts.

The protein resides in the secreted. Its subcellular location is the extracellular space. It localises to the extracellular matrix. It catalyses the reaction Cleavage of gelatin type I and collagen types IV, V, VII, X. Cleaves the collagen-like sequence Pro-Gln-Gly-|-Ile-Ala-Gly-Gln.. This is 72 kDa type IV collagenase (MMP2) from Gallus gallus (Chicken).